A 389-amino-acid polypeptide reads, in one-letter code: Chitin-binding protein CbpD (389 aa).

The N-terminal stretch at M1–A25 is a signal peptide. One can recognise a Chitin-binding type-4 domain in the interval H26–S208.

Can be detected in the extracellular supernatant as a 43 kDa protein and a 23 kDa protein, both proteins have the same N-terminus. Only the larger protein binds chitin, which may protect it from further processing and/or degradation by elastase (lasB). It is not clear whether the short form is functional or a degradation product.

It is found in the secreted. Functionally, binds chitin but does not hydrolyze it, has no detectable protease or staphylolytic activity. This is Chitin-binding protein CbpD from Pseudomonas aeruginosa (strain ATCC 15692 / DSM 22644 / CIP 104116 / JCM 14847 / LMG 12228 / 1C / PRS 101 / PAO1).